The following is a 338-amino-acid chain: Holliday junction branch migration complex subunit RuvB (338 aa).

A large ATPase domain (RuvB-L) region spans residues 1-179 (MTDLTTPIRT…FGIPVRLNFY (179 aa)). ATP-binding residues include leucine 18, arginine 19, glycine 60, lysine 63, threonine 64, threonine 65, arginine 169, tyrosine 179, and arginine 216. Residue threonine 64 coordinates Mg(2+). Residues 180–250 (THAELEQVIG…AADAALNRLE (71 aa)) form a small ATPAse domain (RuvB-S) region. The tract at residues 253-338 (ALGLDAMDRR…AGSQDGLFDK (86 aa)) is head domain (RuvB-H). DNA contacts are provided by arginine 289, arginine 308, and arginine 313.

It belongs to the RuvB family. In terms of assembly, homohexamer. Forms an RuvA(8)-RuvB(12)-Holliday junction (HJ) complex. HJ DNA is sandwiched between 2 RuvA tetramers; dsDNA enters through RuvA and exits via RuvB. An RuvB hexamer assembles on each DNA strand where it exits the tetramer. Each RuvB hexamer is contacted by two RuvA subunits (via domain III) on 2 adjacent RuvB subunits; this complex drives branch migration. In the full resolvosome a probable DNA-RuvA(4)-RuvB(12)-RuvC(2) complex forms which resolves the HJ.

The protein localises to the cytoplasm. The enzyme catalyses ATP + H2O = ADP + phosphate + H(+). The RuvA-RuvB-RuvC complex processes Holliday junction (HJ) DNA during genetic recombination and DNA repair, while the RuvA-RuvB complex plays an important role in the rescue of blocked DNA replication forks via replication fork reversal (RFR). RuvA specifically binds to HJ cruciform DNA, conferring on it an open structure. The RuvB hexamer acts as an ATP-dependent pump, pulling dsDNA into and through the RuvAB complex. RuvB forms 2 homohexamers on either side of HJ DNA bound by 1 or 2 RuvA tetramers; 4 subunits per hexamer contact DNA at a time. Coordinated motions by a converter formed by DNA-disengaged RuvB subunits stimulates ATP hydrolysis and nucleotide exchange. Immobilization of the converter enables RuvB to convert the ATP-contained energy into a lever motion, pulling 2 nucleotides of DNA out of the RuvA tetramer per ATP hydrolyzed, thus driving DNA branch migration. The RuvB motors rotate together with the DNA substrate, which together with the progressing nucleotide cycle form the mechanistic basis for DNA recombination by continuous HJ branch migration. Branch migration allows RuvC to scan DNA until it finds its consensus sequence, where it cleaves and resolves cruciform DNA. This is Holliday junction branch migration complex subunit RuvB from Sphingopyxis alaskensis (strain DSM 13593 / LMG 18877 / RB2256) (Sphingomonas alaskensis).